Here is a 289-residue protein sequence, read N- to C-terminus: Serine/threonine-protein phosphatase Pgam5, mitochondrial (289 aa).

The chain crosses the membrane as a helical span at residues Leu7–Leu23.

The protein belongs to the phosphoglycerate mutase family. BPG-dependent PGAM subfamily. As to quaternary structure, interacts with Pk92B/ASK1.

The protein localises to the mitochondrion outer membrane. It carries out the reaction O-phospho-L-seryl-[protein] + H2O = L-seryl-[protein] + phosphate. The enzyme catalyses O-phospho-L-threonyl-[protein] + H2O = L-threonyl-[protein] + phosphate. Functionally, displays phosphatase activity for serine/threonine residues, and dephosphorylates and activates Pk92B kinase. Has apparently no phosphoglycerate mutase activity. The chain is Serine/threonine-protein phosphatase Pgam5, mitochondrial from Drosophila ananassae (Fruit fly).